Consider the following 272-residue polypeptide: ATP-dependent Clp protease proteolytic subunit, mitochondrial (272 aa).

The N-terminal 52 residues, 1–52, are a transit peptide targeting the mitochondrion; it reads MWPRVLLGEARVAVDGCRALLSRLAVHFSPPWTAVSCSPLRRSLHGTATRAF. Catalysis depends on Ser-149, which acts as the Nucleophile. His-174 is an active-site residue. The residue at position 196 (Lys-196) is an N6-succinyllysine. Lys-207 is subject to N6-acetyllysine. A disordered region spans residues 240 to 272; the sequence is VLVHPPQDGEDEPELVQKETATAPTDPPAPTST.

Belongs to the peptidase S14 family. As to quaternary structure, fourteen CLPP subunits assemble into 2 heptameric rings which stack back to back to give a disk-like structure with a central cavity. Component of the ClpXP complex formed by the assembly of two CLPP heptameric rings with two CLPX hexameric rings, giving rise to a symmetrical structure with two central CLPP rings flanked by a CLPX ring at either end of the complex. In terms of tissue distribution, detected in liver (at protein level). High levels found in heart, liver and skeletal muscle.

The protein resides in the mitochondrion matrix. It catalyses the reaction Hydrolysis of proteins to small peptides in the presence of ATP and magnesium. alpha-casein is the usual test substrate. In the absence of ATP, only oligopeptides shorter than five residues are hydrolyzed (such as succinyl-Leu-Tyr-|-NHMec, and Leu-Tyr-Leu-|-Tyr-Trp, in which cleavage of the -Tyr-|-Leu- and -Tyr-|-Trp bonds also occurs).. In terms of biological role, protease component of the ClpXP complex that cleaves peptides and various proteins in an ATP-dependent process. Has low peptidase activity in the absence of CLPX. The ClpXP complex can degrade CSN1S1, CSN2 and CSN3, as well as synthetic peptides (in vitro) and may be responsible for a fairly general and central housekeeping function rather than for the degradation of specific substrates. Cleaves PINK1 in the mitochondrion. The polypeptide is ATP-dependent Clp protease proteolytic subunit, mitochondrial (Mus musculus (Mouse)).